A 212-amino-acid polypeptide reads, in one-letter code: Thymidylate kinase (212 aa).

Alanine 2 carries the N-acetylalanine modification. ATP-binding positions include 16 to 21 (RAGKTT) and arginine 97. Positions 133–157 (LQLQLLDAAARGEFGLERYETGTFQ) are LID. ATP contacts are provided by lysine 182 and arginine 192.

The protein belongs to the thymidylate kinase family. In terms of assembly, homodimer. Mg(2+) is required as a cofactor.

The enzyme catalyses dTMP + ATP = dTDP + ADP. It participates in pyrimidine metabolism; dTTP biosynthesis. In terms of biological role, catalyzes the phosphorylation of thymidine monophosphate (dTMP) to thymidine diphosphate (dTDP), the immediate precursor for the DNA building block dTTP, with ATP as the preferred phosphoryl donor in the presence of Mg(2+). In Mus musculus (Mouse), this protein is Thymidylate kinase (Dtymk).